The primary structure comprises 429 residues: MRIPIKDVTPEIGHARIAGWVHEERDLGGLTFLLVRDRTGILQVTIPKKKVTPEVLAAVKEATRESVIECEGVVKATEKAPGGRELVPDMLRVVSRAETPLPLDVSEKVPAELDTRLDNRYLDLRKPRINAIFQIRNACLRAISEYLWDNGFTQVQTPKIVAAATEGGTELFPLAYFDKEAFLNQSPQLYKQMLMSAGFDRVFEIGAIFRAEEHNTVRHLNEATSIDIEMSFANEEDAMHVLENVVASAYQYVADHCGDALATLGITDFKVPTVPFPRITYKEAIEISTAGGEPLVFGDDLSTAAERIVGEKMGTMYFITEWPTSTRPFYTMPFEDRPEVCRAFDMMHPRMELTSGAQRCHIHSLLVEQIKAKGLNPDAFEFYLNPFRYGMPPHAGWGLGAERLVMTMLDLQNIREAVLFPRDRHRVSP.

Glu166 is a binding site for L-aspartate. The aspartate stretch occupies residues 188–191; the sequence is QLYK. An L-aspartate-binding site is contributed by Arg210. Residues 210 to 212, 218 to 220, and Glu352 contribute to the ATP site; these read RAE and RHL. Glu352 and Ser355 together coordinate Mg(2+). Residues Ser355 and Arg359 each coordinate L-aspartate. An ATP-binding site is contributed by 400 to 403; that stretch reads GAER.

Belongs to the class-II aminoacyl-tRNA synthetase family. Type 2 subfamily. As to quaternary structure, homodimer. Mg(2+) serves as cofactor.

It localises to the cytoplasm. It carries out the reaction tRNA(Asx) + L-aspartate + ATP = L-aspartyl-tRNA(Asx) + AMP + diphosphate. Aspartyl-tRNA synthetase with relaxed tRNA specificity since it is able to aspartylate not only its cognate tRNA(Asp) but also tRNA(Asn). Reaction proceeds in two steps: L-aspartate is first activated by ATP to form Asp-AMP and then transferred to the acceptor end of tRNA(Asp/Asn). This is Aspartate--tRNA(Asp/Asn) ligase from Methanocorpusculum labreanum (strain ATCC 43576 / DSM 4855 / Z).